The sequence spans 128 residues: MIYVLYSPNCAVCKKVVRFFRNNQIEITKIIIGEDKIERSMLLDILSLCEDGFGTIISFKTESSKRLNITSKTFLDLSTKELLNLIQNDLNLIRRPLIYQTKNNRPYRLQIGYDSEEIEIFKRAVHEK.

Cys10 and Cys13 are oxidised to a cystine.

Belongs to the ArsC family.

This is an uncharacterized protein from Ureaplasma parvum serovar 3 (strain ATCC 700970).